A 684-amino-acid chain; its full sequence is Methionine--tRNA ligase (684 aa).

Positions 17–27 match the 'HIGH' region motif; it reads PYANGKAHVGH. 4 residues coordinate Zn(2+): Cys-148, Cys-151, Cys-160, and Cys-164. The 'KMSKS' region signature appears at 330–334; sequence TFSKS. Lys-333 provides a ligand contact to ATP. The 103-residue stretch at 582 to 684 folds into the tRNA-binding domain; the sequence is DFSKLDIRIG…KETNPGTCIH (103 aa).

It belongs to the class-I aminoacyl-tRNA synthetase family. MetG type 1 subfamily. In terms of assembly, homodimer. The cofactor is Zn(2+).

It is found in the cytoplasm. It carries out the reaction tRNA(Met) + L-methionine + ATP = L-methionyl-tRNA(Met) + AMP + diphosphate. Is required not only for elongation of protein synthesis but also for the initiation of all mRNA translation through initiator tRNA(fMet) aminoacylation. The polypeptide is Methionine--tRNA ligase (Methanococcoides burtonii (strain DSM 6242 / NBRC 107633 / OCM 468 / ACE-M)).